The chain runs to 103 residues: Regulator of rDNA transcription protein 1 (103 aa).

A run of 2 helical transmembrane segments spans residues 9–33 (FLPS…WVLV) and 40–57 (VAFI…YTFF).

The protein localises to the membrane. In terms of biological role, identified in a screen for mutants with decreased levels of rDNA transcription. This is Regulator of rDNA transcription protein 1 (RRT1) from Saccharomyces cerevisiae (strain ATCC 204508 / S288c) (Baker's yeast).